A 279-amino-acid polypeptide reads, in one-letter code: Thioredoxin domain-containing protein plp1 (279 aa).

Residues 56–70 (RKEDTQDYNEPELHN) are compositionally biased toward basic and acidic residues. Positions 56-75 (RKEDTQDYNEPELHNSNDPT) are disordered. Positions 137 to 248 (FLTVENEREV…LEFRLLKSSA (112 aa)) constitute a Thioredoxin domain. Positions 254–267 (EESSSNKSIYHDEL) are enriched in basic and acidic residues. Residues 254 to 279 (EESSSNKSIYHDELQNNQSDDSDFFE) form a disordered region. Phosphoserine occurs at positions 272 and 275.

The protein belongs to the phosducin family.

It is found in the cytoplasm. Its subcellular location is the nucleus. Its function is as follows. Inhibits early G-protein signaling events following pheromone stimulation. May help create heterodimerizable beta-tubulin by facilitating the efficient transfer of nascent beta-tubulin polypeptides to the folding apparatus. This is Thioredoxin domain-containing protein plp1 (plp1) from Schizosaccharomyces pombe (strain 972 / ATCC 24843) (Fission yeast).